Reading from the N-terminus, the 651-residue chain is Bromodomain-containing protein 7 (651 aa).

K21 participates in a covalent cross-link: Glycyl lysine isopeptide (Lys-Gly) (interchain with G-Cter in SUMO2). Positions T35 to D45 are enriched in polar residues. Residues T35 to E132 are disordered. The span at S47–K57 shows a compositional bias: basic and acidic residues. A Glycyl lysine isopeptide (Lys-Gly) (interchain with G-Cter in SUMO2) cross-link involves residue K52. Residues H58–G69 show a composition bias toward basic residues. Positions K65–R96 match the Nuclear localization signal motif. Over residues E70–Q106 the composition is skewed to basic and acidic residues. Glycyl lysine isopeptide (Lys-Gly) (interchain with G-Cter in SUMO2) cross-links involve residues K127, K186, K197, K201, K212, and K241. The 105-residue stretch at V131 to E235 folds into the Bromo domain. Positions T253–E312 are disordered. Positions Q273–E312 are enriched in basic and acidic residues. S279 and S289 each carry phosphoserine. Residues K305 and K307 each participate in a glycyl lysine isopeptide (Lys-Gly) (interchain with G-Cter in SUMO2) cross-link. N6-acetyllysine is present on K328. K344 is covalently cross-linked (Glycyl lysine isopeptide (Lys-Gly) (interchain with G-Cter in SUMO2)). Position 380 is a phosphoserine (S380). Residue K389 forms a Glycyl lysine isopeptide (Lys-Gly) (interchain with G-Cter in SUMO2) linkage. A Phosphoserine modification is found at S482. The residue at position 514 (T514) is a Phosphothreonine. Residues S536–R567 adopt a coiled-coil conformation. The residue at position 621 (S621) is a Phosphoserine.

As to quaternary structure, interacts with TRIM24, PTPN13 and DVL1. Identified in a complex with SMARCA4/BRG1, SMARCC1/BAF155, SMARCE1/BAF57, DPF2/BAF45D and ARID2, subunits of the SWI/SNF-B (PBAF) chromatin remodeling complex. Interacts with IRF2 and HNRPUL1. Interacts (via N-terminus) with TP53. Interacts (via C-terminus) with EP300. Interacts with BRCA1. Interacts (via bromo domain) with histone H3 (via N-terminus) acetylated at 'Lys-14' (H3K14ac). Has low affinity for histone H3 acetylated at 'Lys-9' (H3K9ac). Has the highest affinity for histone H3 that is acetylated both at 'Lys-9' (H3K9ac) and at 'Lys-14' (H3K14ac). Has very low affinity for non-acetylated histone H3. Interacts (via bromo domain) with histone H4 (via N-terminus) acetylated at 'Lys-8' (H3K8ac) (in vitro).

The protein localises to the nucleus. Its subcellular location is the chromosome. In terms of biological role, acts both as coactivator and as corepressor. May play a role in chromatin remodeling. Activator of the Wnt signaling pathway in a DVL1-dependent manner by negatively regulating the GSK3B phosphotransferase activity. Induces dephosphorylation of GSK3B at 'Tyr-216'. Down-regulates TRIM24-mediated activation of transcriptional activation by AR. Transcriptional corepressor that down-regulates the expression of target genes. Binds to target promoters, leading to increased histone H3 acetylation at 'Lys-9' (H3K9ac). Binds to the ESR1 promoter. Recruits BRCA1 and POU2F1 to the ESR1 promoter. Coactivator for TP53-mediated activation of transcription of a set of target genes. Required for TP53-mediated cell-cycle arrest in response to oncogene activation. Promotes acetylation of TP53 at 'Lys-382', and thereby promotes efficient recruitment of TP53 to target promoters. Inhibits cell cycle progression from G1 to S phase. In Pongo abelii (Sumatran orangutan), this protein is Bromodomain-containing protein 7 (BRD7).